The sequence spans 122 residues: Large ribosomal subunit protein uL14c (122 aa).

It belongs to the universal ribosomal protein uL14 family. In terms of assembly, part of the 50S ribosomal subunit.

The protein resides in the plastid. It localises to the chloroplast. Binds to 23S rRNA. This is Large ribosomal subunit protein uL14c from Psilotum nudum (Whisk fern).